The chain runs to 407 residues: Putative F-box protein At5g60560 (407 aa).

The region spanning 2-49 (TMMSDLSEDLVEEILCRVSITSLGAVRSTCKGWYVLSKTRVLCKAETK) is the F-box domain.

This Arabidopsis thaliana (Mouse-ear cress) protein is Putative F-box protein At5g60560.